The primary structure comprises 842 residues: Protein P (842 aa).

The tract at residues 1-177 is terminal protein domain (TP); the sequence is MPLSYQHFRK…FCGSPYSWEQ (177 aa). Residues 178–346 are spacer; that stretch reads ELQHGRLVFQ…YCLTHIVNLL (169 aa). Residues 218–274 are disordered; the sequence is LKQSRLGLQPQQGSLARGKSGRSGSIRARVPPTTRRSFGVEPSGSGHIDNRASSTSS. The polymerase/reverse transcriptase domain (RT) stretch occupies residues 347–690; that stretch reads EDWGPCTEHG…YLHLYPVARR (344 aa). The Reverse transcriptase domain occupies 357 to 600; the sequence is EHNIRIPRTP…YSLNFMGYVI (244 aa). 3 residues coordinate Mg(2+): D429, D551, and D552.

Belongs to the hepadnaviridae P protein family.

The catalysed reaction is DNA(n) + a 2'-deoxyribonucleoside 5'-triphosphate = DNA(n+1) + diphosphate. The enzyme catalyses Endonucleolytic cleavage to 5'-phosphomonoester.. Its activity is regulated as follows. Activated by host HSP70 and HSP40 in vitro to be able to bind the epsilon loop of the pgRNA. Because deletion of the RNase H region renders the protein partly chaperone-independent, the chaperones may be needed indirectly to relieve occlusion of the RNA-binding site by this domain. Inhibited by several reverse-transcriptase inhibitors: Lamivudine, Adefovir and Entecavir. Multifunctional enzyme that converts the viral RNA genome into dsDNA in viral cytoplasmic capsids. This enzyme displays a DNA polymerase activity that can copy either DNA or RNA templates, and a ribonuclease H (RNase H) activity that cleaves the RNA strand of RNA-DNA heteroduplexes in a partially processive 3'- to 5'-endonucleasic mode. Neo-synthesized pregenomic RNA (pgRNA) are encapsidated together with the P protein, and reverse-transcribed inside the nucleocapsid. Initiation of reverse-transcription occurs first by binding the epsilon loop on the pgRNA genome, and is initiated by protein priming, thereby the 5'-end of (-)DNA is covalently linked to P protein. Partial (+)DNA is synthesized from the (-)DNA template and generates the relaxed circular DNA (RC-DNA) genome. After budding and infection, the RC-DNA migrates in the nucleus, and is converted into a plasmid-like covalently closed circular DNA (cccDNA). The activity of P protein does not seem to be necessary for cccDNA generation, and is presumably released from (+)DNA by host nuclear DNA repair machinery. In Hepatitis B virus genotype C subtype adr (isolate Korea/Kim/1989) (HBV-C), this protein is Protein P.